Consider the following 97-residue polypeptide: Protein RALF-like 2 (97 aa).

The first 25 residues, 1 to 25 (MEARHMLVTILLLSFVFMNIMKVEA), serve as a signal peptide directing secretion. 2 cysteine pairs are disulfide-bonded: Cys42/Cys49 and Cys61/Cys67.

The protein belongs to the plant rapid alkalinization factor (RALF) family.

The protein resides in the secreted. Cell signaling peptide that may regulate plant stress, growth, and development. Mediates a rapid alkalinization of extracellular space by mediating a transient increase in the cytoplasmic Ca(2+) concentration leading to a calcium-dependent signaling events through a cell surface receptor and a concomitant activation of some intracellular mitogen-activated protein kinases. This Arabidopsis thaliana (Mouse-ear cress) protein is Protein RALF-like 2 (RALFL2).